The following is a 431-amino-acid chain: MFVDQVKVDVKAGNGGNGMVAFRREKFVPNGGPAGGDGGRGGSVVLQADEGLRTLMDFRYTRKFKAAAGGNGMIKQMTGRSAKDTIIKVPLGTTVTDAETGELIGDIVNKDQRLVVAKGGRGGRGNIHFASAKNPAPEIAENGEPGDELTIRMELKVLADVGLVGFPSVGKSTLLSVVTSAKPKIAAYHFTTLVPNLGMVRLDDGRDFVMADLPGLIEGAANGVGLGIQFLRHIERTRVILHLIDMSGVEENDPFEDYHKINHELTSYDPDLLKRPQIVVATKMDMPDAEANLEDFKAKLATDDTLPNTPAVYPVSSITQQGLKALLAKTADLLDTTPQFPIKGVDDLKHRDYTTEADADFSIDNPEPGLFVLSGDKLERLFKMTNLDHEESLMRFARQLRGMGVDDALRAAGAKNDDTIQILDYSFQFMD.

Residues 1–158 (MFVDQVKVDV…LTIRMELKVL (158 aa)) form the Obg domain. Residues 159 to 335 (ADVGLVGFPS…LLAKTADLLD (177 aa)) enclose the OBG-type G domain. GTP is bound by residues 165-172 (GFPSVGKS), 190-194 (FTTLV), 212-215 (DLPG), 282-285 (TKMD), and 316-318 (SSI). Ser-172 and Thr-192 together coordinate Mg(2+). Residues 353-431 (YTTEADADFS…ILDYSFQFMD (79 aa)) enclose the OCT domain.

It belongs to the TRAFAC class OBG-HflX-like GTPase superfamily. OBG GTPase family. Monomer. Mg(2+) is required as a cofactor.

Its subcellular location is the cytoplasm. In terms of biological role, an essential GTPase which binds GTP, GDP and possibly (p)ppGpp with moderate affinity, with high nucleotide exchange rates and a fairly low GTP hydrolysis rate. Plays a role in control of the cell cycle, stress response, ribosome biogenesis and in those bacteria that undergo differentiation, in morphogenesis control. The protein is GTPase Obg of Lactiplantibacillus plantarum (strain ATCC BAA-793 / NCIMB 8826 / WCFS1) (Lactobacillus plantarum).